The following is a 34-amino-acid chain: uncharacterized protein (34 aa).

The disordered stretch occupies residues 1-34 (MRLRRLFKQPSTRVLGVTNCPRQQGHQKRREQPD). Basic residues predominate over residues 25–34 (GHQKRREQPD).

This is an uncharacterized protein from Schizosaccharomyces pombe (strain 972 / ATCC 24843) (Fission yeast).